The following is an 89-amino-acid chain: Arminin 375 (89 aa).

The first 18 residues, 1-18 (MKAVFAILFLAFIALTYA), serve as a signal peptide directing secretion. The propeptide occupies 19-57 (KSYDEVKEEIKNEVEREIFEDLEEESDELDNYVEESNDA). The residue at position 86 (A86) is an Alanine amide.

This sequence belongs to the arminin family. As to expression, expressed in entodermal epithelium along the body column.

The protein resides in the secreted. It localises to the target cell membrane. Antimicrobial peptide with a broad-spectrum antimicrobial activity. Keeps its antibacterial activity under a wide range of salt concentrations that mimic physiological conditions of human blood, which is surprising, since Hydra is an obligate freshwater animal with nearly no salt tolerance. Does not affect red blood cells. In Hydra oligactis (Brown hydra), this protein is Arminin 375.